Consider the following 325-residue polypeptide: MSWFTPELIEILISVLKAVVILLVVVTCGAFMSFGERRLLGLFQNRYGPNRVGWGGSLQLVADMIKMFFKEDWVPRFSDRAIFTLAPVIAFTSLLLSFAIVPVSPTWAVADLNIGILFFLMMAGLAVYAVLFAGWASNNKYSLLGAMRASAQTLSYEVFLGLSLMGVVAQVGSFNMQDIVNSQEHVWNVIPQFFGFLTFAIAGVAVCHRHPFDQPEAEQELADGYHIEYSGMKFGLFFVGEYIGIVTVSALIVTLFFGGWQGPFLPPFIWFALKTAFFMVMFILIRASLPRPRYDQVMSFGWKVCLPLTLLNLLATAAVILYNAQ.

A run of 8 helical transmembrane segments spans residues 11-31 (ILIS…CGAF), 81-101 (AIFT…FAIV), 114-134 (IGIL…LFAG), 154-174 (LSYE…VGSF), 186-206 (VWNV…GVAV), 237-257 (FFVG…TLFF), 265-285 (LPPF…FILI), and 304-324 (VCLP…LYNA).

The protein belongs to the complex I subunit 1 family. NDH-1 is composed of 13 different subunits. Subunits NuoA, H, J, K, L, M, N constitute the membrane sector of the complex.

It is found in the cell inner membrane. The catalysed reaction is a quinone + NADH + 5 H(+)(in) = a quinol + NAD(+) + 4 H(+)(out). Its function is as follows. NDH-1 shuttles electrons from NADH, via FMN and iron-sulfur (Fe-S) centers, to quinones in the respiratory chain. The immediate electron acceptor for the enzyme in this species is believed to be ubiquinone. Couples the redox reaction to proton translocation (for every two electrons transferred, four hydrogen ions are translocated across the cytoplasmic membrane), and thus conserves the redox energy in a proton gradient. This subunit may bind ubiquinone. The sequence is that of NADH-quinone oxidoreductase subunit H from Yersinia pseudotuberculosis serotype O:3 (strain YPIII).